The primary structure comprises 179 residues: Large ribosomal subunit protein bL9 (179 aa).

Residues 155–179 form a disordered region; it reads KPEEAPVPVAEEPTAETEQAEVAAE. The segment covering 167–179 has biased composition (acidic residues); the sequence is PTAETEQAEVAAE.

This sequence belongs to the bacterial ribosomal protein bL9 family.

Functionally, binds to the 23S rRNA. The sequence is that of Large ribosomal subunit protein bL9 from Porphyromonas gingivalis (strain ATCC BAA-308 / W83).